A 555-amino-acid polypeptide reads, in one-letter code: MTTKKMLVTCALPYANGSLHIGHMLEHIQADIWVRYQRMQGNCVYFICADDAHGTAIMLKSQQLNIAPEQMIAQIRQEHQRDCYKFGISYDNYYSTHSDETRELLHDIYSRLNTRGFIKSKFISQLYDSKKNMFLPDRFVKGICPKCKKDDQYGDNCAACGTIYTSLELINPKSVISGTSPIIRKSEHLFFDLPAFTDTLRTWIRSGSIQKEVANKVEEWFKLGLKKWDISRDAPYFGFKIPNSSEKYFYVWMDAPVGYMGTFKNLCKKNKNISFNDFWGSNSKTDLYHFIGKDIIYFHCLFWPAVLSGSQFRKPTNIFVHGHVTLNGSKISKSKGTCINVSTYLSCLNPDYLRYYYATKLSSHANDIDLNLSDFITRVNSDIINKILNLASRNSGFIHQYYNGHLSNTLTHPLIYNMFIESRHYIGKLFQKREFNYAMREIMKLADEANRYIDKHAPWHIAKKIDRRQEALSIYSMGIQLFRVLMIYLKPVLPKLANYSECFLNTRLTWGSLSAPLSNHRINKFKIIFSRIHPDQIASMTNKSQLHERLTDNNV.

The 'HIGH' region motif lies at 13–23 (PYANGSLHIGH). 4 residues coordinate Zn(2+): cysteine 144, cysteine 147, cysteine 157, and cysteine 160. The 'KMSKS' region signature appears at 330 to 334 (KISKS). Residue lysine 333 coordinates ATP.

It belongs to the class-I aminoacyl-tRNA synthetase family. MetG type 1 subfamily. Monomer. It depends on Zn(2+) as a cofactor.

The protein resides in the cytoplasm. It catalyses the reaction tRNA(Met) + L-methionine + ATP = L-methionyl-tRNA(Met) + AMP + diphosphate. In terms of biological role, is required not only for elongation of protein synthesis but also for the initiation of all mRNA translation through initiator tRNA(fMet) aminoacylation. This is Methionine--tRNA ligase from Blochmanniella pennsylvanica (strain BPEN).